The sequence spans 241 residues: UDP-2,3-diacylglucosamine hydrolase (241 aa).

Positions 9, 11, 42, 79, and 114 each coordinate Mn(2+). Residue Asn-79–Arg-80 coordinates substrate. Substrate contacts are provided by Asp-122, Ser-160, Asn-164, Lys-167, and His-195. Residues His-195 and His-197 each contribute to the Mn(2+) site.

It belongs to the LpxH family. Mn(2+) serves as cofactor.

It localises to the cell inner membrane. The catalysed reaction is UDP-2-N,3-O-bis[(3R)-3-hydroxytetradecanoyl]-alpha-D-glucosamine + H2O = 2-N,3-O-bis[(3R)-3-hydroxytetradecanoyl]-alpha-D-glucosaminyl 1-phosphate + UMP + 2 H(+). It participates in glycolipid biosynthesis; lipid IV(A) biosynthesis; lipid IV(A) from (3R)-3-hydroxytetradecanoyl-[acyl-carrier-protein] and UDP-N-acetyl-alpha-D-glucosamine: step 4/6. Its function is as follows. Hydrolyzes the pyrophosphate bond of UDP-2,3-diacylglucosamine to yield 2,3-diacylglucosamine 1-phosphate (lipid X) and UMP by catalyzing the attack of water at the alpha-P atom. Involved in the biosynthesis of lipid A, a phosphorylated glycolipid that anchors the lipopolysaccharide to the outer membrane of the cell. This Shewanella frigidimarina (strain NCIMB 400) protein is UDP-2,3-diacylglucosamine hydrolase.